Here is a 401-residue protein sequence, read N- to C-terminus: (1R,4R,5S)-(-)-guaia-6,10(14)-diene synthase (401 aa).

The tract at residues Met-1–Asn-21 is disordered. Positions 134 and 139 each coordinate Mg(2+). The DDXXD motif motif lies at Asp-134–Asp-138. Arg-242 lines the substrate pocket. 2 residues coordinate Mg(2+): Asn-288 and Ser-292. Lys-295 contributes to the substrate binding site. Asp-296 provides a ligand contact to Mg(2+). Arg-375–Tyr-376 is a binding site for substrate.

Belongs to the terpene synthase family. Requires Mg(2+) as cofactor.

The enzyme catalyses (2E,6E)-farnesyl diphosphate = (1R,4R,5S)-(-)-guaia-6,10(14)-diene + diphosphate. It participates in secondary metabolite biosynthesis; terpenoid biosynthesis. Functionally, catalyzes the conversion of (2E,6E)-farnesyl diphosphate (FPP) to yield the bicyclic sesquiterpene guaia-6,10(14)-diene via a 1,10-cyclization, which requires the abstraction of the pyrophosphate from FPP to yield the (E,E)-germacradienyl cation. The only accepted substrate is farnesyl diphosphate (FPP). This chain is (1R,4R,5S)-(-)-guaia-6,10(14)-diene synthase, found in Fusarium proliferatum (strain ET1) (Orchid endophyte fungus).